Consider the following 507-residue polypeptide: Probable D-lactate dehydrogenase, mitochondrial (507 aa).

Residues 1 to 52 (MARLLRSATWELFPWRGYCSQKAKGELCRDFVEALKAVVGGSHVSTAAVVRE) constitute a mitochondrion transit peptide. N6-acetyllysine is present on lysine 36. The FAD-binding PCMH-type domain maps to 62-265 (RCEPPDAVVW…TATTLRLHPA (204 aa)). Lysine 315 is modified (N6-acetyllysine). At lysine 358 the chain carries N6-acetyllysine; alternate. Lysine 358 carries the N6-succinyllysine; alternate modification. Lysine 445 and lysine 472 each carry N6-acetyllysine.

Belongs to the FAD-binding oxidoreductase/transferase type 4 family. As to quaternary structure, interacts with CSRP3. Requires FAD as cofactor. Expressed moderately in heart and liver and at lower levels in skeletal muscle and kidney.

The protein localises to the mitochondrion. It catalyses the reaction (R)-lactate + 2 Fe(III)-[cytochrome c] = 2 Fe(II)-[cytochrome c] + pyruvate + 2 H(+). Its function is as follows. Involved in D-lactate, but not L-lactate catabolic process. In Homo sapiens (Human), this protein is Probable D-lactate dehydrogenase, mitochondrial.